The primary structure comprises 129 residues: Small ribosomal subunit protein uS9 (129 aa).

The tract at residues 98–129 is disordered; sequence KAQGFLTRDPRKKERKKYGRKKARKSFQFSKR. Over residues 110 to 129 the composition is skewed to basic residues; it reads KERKKYGRKKARKSFQFSKR.

This sequence belongs to the universal ribosomal protein uS9 family.

In Chlamydia trachomatis serovar L2 (strain ATCC VR-902B / DSM 19102 / 434/Bu), this protein is Small ribosomal subunit protein uS9.